Consider the following 388-residue polypeptide: RNA binding motif protein, X-linked-like-1 (388 aa).

Residues glycine 8–lysine 86 form the RRM domain. The span at aspartate 61–lysine 80 shows a compositional bias: basic and acidic residues. A disordered region spans residues aspartate 61–isoleucine 388. A Glycyl lysine isopeptide (Lys-Gly) (interchain with G-Cter in SUMO2) cross-link involves residue lysine 80. Serine 88 bears the Phosphoserine mark. A compositionally biased stretch (pro residues) spans arginine 148 to arginine 161. Composition is skewed to basic and acidic residues over residues proline 191 to serine 212 and tyrosine 238 to aspartate 271. Low complexity predominate over residues serine 320–tyrosine 332. Composition is skewed to basic and acidic residues over residues serine 333–arginine 344 and serine 377–isoleucine 388.

It localises to the nucleus. RNA-binding protein which may be involved in pre-mRNA splicing. The sequence is that of RNA binding motif protein, X-linked-like-1 (Rbmxl1) from Rattus norvegicus (Rat).